Reading from the N-terminus, the 409-residue chain is Tetracenomycin polyketide synthase ketoacyl synthase beta subunit (409 aa).

Residues 4–407 (PAPVVVTGLG…GFNSALVVRR (404 aa)) form the Ketosynthase family 3 (KS3) domain.

The protein belongs to the thiolase-like superfamily. Beta-ketoacyl-ACP synthases family. In terms of assembly, the tetracenomycin polyketide synthase (TCM PKS) is composed of a ketosynthase complex (TcmKL), an acyl carrier protein (TcmM), a cyclase (TcmN) and a probable second cyclase (TcmJ). TcmK and TcmL form a heterodimeric complex.

It carries out the reaction 10 malonyl-CoA + 8 H(+) = tetracenomycin F2 + 10 CO2 + 10 CoA + 2 H2O. It functions in the pathway antibiotic biosynthesis; tetracenomycin C biosynthesis. Functionally, involved in the biosynthesis of tetracenomycin C (TCM C). Part of a type II polyketide synthase (PKS) that catalyzes the synthesis of tetracenomycin F2 (TCM F2), a precursor of TCM C, from malonyl-CoA. TcmK and TcmL form a heterodimeric alpha-beta complex that catalyzes the condensation reactions between the growing acyl-enzyme chain and the malonyl-CoA extender units. The sequence is that of Tetracenomycin polyketide synthase ketoacyl synthase beta subunit from Streptomyces glaucescens.